Here is a 234-residue protein sequence, read N- to C-terminus: Large ribosomal subunit protein uL1 (234 aa).

It belongs to the universal ribosomal protein uL1 family. As to quaternary structure, part of the 50S ribosomal subunit.

Binds directly to 23S rRNA. The L1 stalk is quite mobile in the ribosome, and is involved in E site tRNA release. In terms of biological role, protein L1 is also a translational repressor protein, it controls the translation of the L11 operon by binding to its mRNA. This Aliivibrio fischeri (strain ATCC 700601 / ES114) (Vibrio fischeri) protein is Large ribosomal subunit protein uL1.